Reading from the N-terminus, the 491-residue chain is Probable glycine dehydrogenase (decarboxylating) subunit 2 (491 aa).

Lys273 carries the N6-(pyridoxal phosphate)lysine modification.

This sequence belongs to the GcvP family. C-terminal subunit subfamily. The glycine cleavage system is composed of four proteins: P, T, L and H. In this organism, the P 'protein' is a heterodimer of two subunits. Pyridoxal 5'-phosphate serves as cofactor.

It carries out the reaction N(6)-[(R)-lipoyl]-L-lysyl-[glycine-cleavage complex H protein] + glycine + H(+) = N(6)-[(R)-S(8)-aminomethyldihydrolipoyl]-L-lysyl-[glycine-cleavage complex H protein] + CO2. The glycine cleavage system catalyzes the degradation of glycine. The P protein binds the alpha-amino group of glycine through its pyridoxal phosphate cofactor; CO(2) is released and the remaining methylamine moiety is then transferred to the lipoamide cofactor of the H protein. The polypeptide is Probable glycine dehydrogenase (decarboxylating) subunit 2 (Bacillus cytotoxicus (strain DSM 22905 / CIP 110041 / 391-98 / NVH 391-98)).